Consider the following 104-residue polypeptide: Nucleoid-associated protein Amuc_1227 (104 aa).

This sequence belongs to the YbaB/EbfC family. In terms of assembly, homodimer.

Its subcellular location is the cytoplasm. It localises to the nucleoid. Functionally, binds to DNA and alters its conformation. May be involved in regulation of gene expression, nucleoid organization and DNA protection. The chain is Nucleoid-associated protein Amuc_1227 from Akkermansia muciniphila (strain ATCC BAA-835 / DSM 22959 / JCM 33894 / BCRC 81048 / CCUG 64013 / CIP 107961 / Muc).